The primary structure comprises 785 residues: Semaphorin-3F (785 aa).

The first 18 residues, 1–18 (MLVTAFILWASLLTGAWP), serve as a signal peptide directing secretion. The region spanning 31 to 545 (RVRLSFKELK…SAVGVTHLSL (515 aa)) is the Sema domain. Residue Asn-53 is glycosylated (N-linked (GlcNAc...) asparagine). Cys-104 and Cys-115 are oxidised to a cystine. An N-linked (GlcNAc...) asparagine glycan is attached at Asn-126. 4 cysteine pairs are disulfide-bonded: Cys-133/Cys-142, Cys-300/Cys-412, Cys-324/Cys-372, and Cys-548/Cys-566. A disordered region spans residues 583–602 (RSRRQDVRHGNPIRQCRGFN). An Ig-like C2-type domain is found at 605–695 (ANKNAVESVQ…KHIVTRVQLH (91 aa)). Cys-678 and Cys-746 form a disulfide bridge. The interval 753-785 (VPPRPREAPGALRPPELQDQKKPRNRRHHPPDT) is disordered. Positions 775-785 (PRNRRHHPPDT) are enriched in basic residues.

The protein belongs to the semaphorin family. Expressed ubiquitously in adulthood. During embryogenesis, expressed in subregions of the central nervous system and various other tissues like skin, kidney, lung and intestine.

The protein resides in the secreted. In Mus musculus (Mouse), this protein is Semaphorin-3F (Sema3f).